A 297-amino-acid chain; its full sequence is Syntaxin-4 (297 aa).

The segment covering 1-12 (MRDRTHELRQGD) has biased composition (basic and acidic residues). The tract at residues 1–21 (MRDRTHELRQGDDSSDEEDKE) is disordered. At 1-275 (MRDRTHELRQ…QKKARKKKVL (275 aa)) the chain is on the cytoplasmic side. A phosphoserine mark is found at Ser-14 and Ser-15. A Phosphothreonine modification is found at Thr-31. A phosphoserine mark is found at Ser-36, Ser-117, Ser-208, and Ser-248. A coiled-coil region spans residues 43 to 163 (HKVRTIRQTI…ERIRRQLKIT (121 aa)). Residues 154–297 (ERIRRQLKIT…AVIIGVTVVG (144 aa)) form an interaction with CENPF region. The t-SNARE coiled-coil homology domain occupies 200–262 (LNEISARHSE…ERGQEHVKTA (63 aa)). Residues 276-296 (IAICVSITVVLLAVIIGVTVV) traverse the membrane as a helical; Anchor for type IV membrane protein segment. Gly-297 is a topological domain (extracellular).

The protein belongs to the syntaxin family. As to quaternary structure, component of the SNARE complex composed of STX4, SNAP23 and VAMP7 that interacts with SYT7 during lysosomal exocytosis. Found in a complex with VAMP8 and SNAP23. Detected in a complex with SNAP23 and STXBP4. Interacts with VAMP2. Interacts with SNAP23 and SNAPIN. Interacts with LLGL1. Interacts (via C-terminus) with CENPF. Interacts with DOC2B. Interacts with STXBP6. Interacts with STXBP3; excludes interaction with DOC2B and SNAP25. Interacts with STXBP4; excludes interaction with VAMP2. Interacts with STXBP5L. In terms of tissue distribution, expressed in neutrophils and neutrophil-differentiated HL-60 cells. Expression in neutrophils increases with differentiation.

It localises to the cell membrane. The protein localises to the cell projection. The protein resides in the neuron projection. It is found in the stereocilium. Plasma membrane t-SNARE that mediates docking of transport vesicles. Necessary for the translocation of SLC2A4 from intracellular vesicles to the plasma membrane. In neurons, recruited at neurite tips to membrane domains rich in the phospholipid 1-oleoyl-2-palmitoyl-PC (OPPC) which promotes neurite tip surface expression of the dopamine transporter SLC6A3/DAT by facilitating fusion of SLC6A3-containing transport vesicles with the plasma membrane. Together with STXB3 and VAMP2, may also play a role in docking/fusion of intracellular GLUT4-containing vesicles with the cell surface in adipocytes and in docking of synaptic vesicles at presynaptic active zones. Required for normal hearing. This Homo sapiens (Human) protein is Syntaxin-4 (STX4).